The sequence spans 223 residues: UPF0758 protein Cvib_1178 (223 aa).

One can recognise an MPN domain in the interval 100–222 (KIQGARDVYE…WYSFRENNQL (123 aa)). Positions 171, 173, and 184 each coordinate Zn(2+). The JAMM motif signature appears at 171–184 (HNHPSGDTEPSNAD).

The protein belongs to the UPF0758 family.

This is UPF0758 protein Cvib_1178 from Chlorobium phaeovibrioides (strain DSM 265 / 1930) (Prosthecochloris vibrioformis (strain DSM 265)).